We begin with the raw amino-acid sequence, 409 residues long: Putative actin-fragmin kinase DDB_G0268812 (409 aa).

The interval 1–45 (MKTFRDFKKKIKNNNNNKNNKNNNINNNNSNNNKNNKNNNNNNSN) is disordered. A coiled-coil region spans residues 5 to 46 (RDFKKKIKNNNNNKNNKNNNINNNNSNNNKNNKNNNNNNSNN). Residues 13-45 (NNNNNKNNKNNNINNNNSNNNKNNKNNNNNNSN) show a composition bias toward low complexity.

This sequence belongs to the protein kinase superfamily. AFK Ser/Thr protein kinase family.

In Dictyostelium discoideum (Social amoeba), this protein is Putative actin-fragmin kinase DDB_G0268812.